The chain runs to 409 residues: Putative kinase Y4dM (409 aa).

Catalysis depends on D293, which acts as the Proton acceptor.

The protein belongs to the HipA Ser/Thr kinase family.

This is Putative kinase Y4dM from Sinorhizobium fredii (strain NBRC 101917 / NGR234).